A 126-amino-acid polypeptide reads, in one-letter code: Protein LiaI (126 aa).

2 helical membrane-spanning segments follow: residues 11–31 (FLLI…GFII) and 56–76 (IIVG…VVGI).

The protein localises to the cell membrane. The chain is Protein LiaI (liaI) from Bacillus subtilis (strain 168).